The chain runs to 428 residues: Adenylosuccinate synthetase (428 aa).

GTP-binding positions include 12-18 (GDEGKGK) and 40-42 (GHT). Residue Asp-13 is the Proton acceptor of the active site. Residues Asp-13 and Gly-40 each coordinate Mg(2+). Residues 13–16 (DEGK), 38–41 (NAGH), Thr-129, Arg-143, Gln-224, Thr-239, and Arg-303 contribute to the IMP site. The Proton donor role is filled by His-41. 299–305 (VTTGRIR) contributes to the substrate binding site. GTP is bound by residues Arg-305, 331 to 333 (KVD), and 410 to 412 (AYG).

The protein belongs to the adenylosuccinate synthetase family. In terms of assembly, homodimer. It depends on Mg(2+) as a cofactor.

The protein localises to the cytoplasm. It carries out the reaction IMP + L-aspartate + GTP = N(6)-(1,2-dicarboxyethyl)-AMP + GDP + phosphate + 2 H(+). Its pathway is purine metabolism; AMP biosynthesis via de novo pathway; AMP from IMP: step 1/2. Its function is as follows. Plays an important role in the de novo pathway of purine nucleotide biosynthesis. Catalyzes the first committed step in the biosynthesis of AMP from IMP. This chain is Adenylosuccinate synthetase, found in Francisella philomiragia subsp. philomiragia (strain ATCC 25017 / CCUG 19701 / FSC 153 / O#319-036).